The following is a 100-amino-acid chain: Small ribosomal subunit protein uS14c (100 aa).

Belongs to the universal ribosomal protein uS14 family. As to quaternary structure, part of the 30S ribosomal subunit.

It is found in the plastid. It localises to the chloroplast. Its function is as follows. Binds 16S rRNA, required for the assembly of 30S particles. This is Small ribosomal subunit protein uS14c from Capsella bursa-pastoris (Shepherd's purse).